The chain runs to 354 residues: 3-dehydroquinate synthase (354 aa).

NAD(+) is bound by residues 100–104 (GATGD), 124–125 (TT), Lys-136, Lys-145, and 163–166 (FLKT). Positions 178, 242, and 256 each coordinate Zn(2+).

It belongs to the sugar phosphate cyclases superfamily. Dehydroquinate synthase family. Requires Co(2+) as cofactor. Zn(2+) is required as a cofactor. NAD(+) serves as cofactor.

Its subcellular location is the cytoplasm. It carries out the reaction 7-phospho-2-dehydro-3-deoxy-D-arabino-heptonate = 3-dehydroquinate + phosphate. Its pathway is metabolic intermediate biosynthesis; chorismate biosynthesis; chorismate from D-erythrose 4-phosphate and phosphoenolpyruvate: step 2/7. Catalyzes the conversion of 3-deoxy-D-arabino-heptulosonate 7-phosphate (DAHP) to dehydroquinate (DHQ). The chain is 3-dehydroquinate synthase from Staphylococcus aureus (strain NCTC 8325 / PS 47).